Reading from the N-terminus, the 645-residue chain is MFSIFIKIILILPSIATKTNNIDIKSWRSAQTFDGFGAVSGGGATSKLLFTYFSEKSDRKQVLESLFNKDNGLQLLKVEMGGDDQSTEGTESSHESEKGKISKNNYEFQLISEVREINPTIPICVLPWAFPGWIGNTPYDNVTETAEYVVNWLKIGRDTWNFDTFCVGVWNERNFSESYVKELRKILNLNGFNETLIVAGEGFRMDDSYSRLLDKRFINEYDIIGVHYPGGRIPENVQKSGKVIWASEDYSTDNRDTGEGCMARTMNWNFINGNITGMISWHLMSAFYPQLPWYRCGLARIDENKFQTEKAFHVLKYITSHVKRGWKILRESSGRFDGGGTYVTYTNGKDSTIFVETMSYKKSLCEYSSPRPYHVKPSQLIRFKFSEIPSFQGLNMSLNFGPSKFFSKSVNSTITILLPVNSFGILTTLPVSTPKRVTIKTPLVPLNYHDDFENYEFDEEPKFWMPQKGSWVVRNGRAVQKVTRPSISWCTSHIRTPYAVMAYRKKNSILNAEVNIPKHSTAKSIILGIRSNCSGCDIEVINCRGIFVEIEFSNKKVTIFSDFVDRSIIAEFKARRKVEFGKFYKFSIHLLDSHLFIKFGNHHVMTSVEIPEEQLNKTNNDTLFVIGTGNFGISEWDNISTDYFH.

Residues 1–16 (MFSIFIKIILILPSIA) form the signal peptide. Substrate-binding residues include Thr-87 and Trp-128. Asn-141 is a glycosylation site (N-linked (GlcNAc...) asparagine). A substrate-binding site is contributed by Asn-171. Glu-172 (proton donor/acceptor) is an active-site residue. N-linked (GlcNAc...) asparagine glycosylation is found at Asn-174 and Asn-193. Glu-248 (nucleophile) is an active-site residue. An intrachain disulfide couples Cys-261 to Cys-365. 7 N-linked (GlcNAc...) asparagine glycosylation sites follow: Asn-274, Asn-395, Asn-411, Asn-532, Asn-616, Asn-620, and Asn-638.

Belongs to the glycosyl hydrolase 59 family.

The catalysed reaction is a beta-D-Gal-(1&lt;-&gt;1')-ceramide + H2O = an N-acyl-sphingoid base + D-galactose. It carries out the reaction a beta-D-galactosyl-(1&lt;-&gt;1')-N-acylsphing-4-enine + H2O = an N-acylsphing-4-enine + D-galactose. Hydrolyzes the galactose ester bonds of galactosylceramide, galactosylsphingoid base, lactosylceramide, and monogalactosyldiglyceride. C.elegans contain specific sphingoid bases, which are unique or different in structure compared to the sphingoid bases found in other animals. Two examples of these distinctive compounds are: 15-methylhexadecasphinganine and 15-methylhexadecasphing-4-enine. This is Putative galactocerebrosidase from Caenorhabditis elegans.